Here is a 111-residue protein sequence, read N- to C-terminus: Large ribosomal subunit protein uL24 (111 aa).

This sequence belongs to the universal ribosomal protein uL24 family. As to quaternary structure, part of the 50S ribosomal subunit.

One of two assembly initiator proteins, it binds directly to the 5'-end of the 23S rRNA, where it nucleates assembly of the 50S subunit. Its function is as follows. One of the proteins that surrounds the polypeptide exit tunnel on the outside of the subunit. The protein is Large ribosomal subunit protein uL24 of Cytophaga hutchinsonii (strain ATCC 33406 / DSM 1761 / CIP 103989 / NBRC 15051 / NCIMB 9469 / D465).